Consider the following 102-residue polypeptide: PqqA binding protein (102 aa).

The protein belongs to the PqqD family. In terms of assembly, monomer. Interacts with PqqE.

The protein operates within cofactor biosynthesis; pyrroloquinoline quinone biosynthesis. Functionally, functions as a PqqA binding protein and presents PqqA to PqqE, in the pyrroloquinoline quinone (PQQ) biosynthetic pathway. The sequence is that of PqqA binding protein from Rhodopseudomonas palustris (strain ATCC BAA-98 / CGA009).